Reading from the N-terminus, the 377-residue chain is Putative F-box only protein 10 (377 aa).

In terms of domain architecture, F-box spans 1–46 (MVSVNLPWELVEEILYRVPPQSLARFRTVCKQWNSLFDDNKFVNDH).

The polypeptide is Putative F-box only protein 10 (FBX10) (Arabidopsis thaliana (Mouse-ear cress)).